Consider the following 1183-residue polypeptide: DNA-directed RNA polymerase subunit beta (1183 aa).

The protein belongs to the RNA polymerase beta chain family. The RNAP catalytic core consists of 2 alpha, 1 beta, 1 beta' and 1 omega subunit. When a sigma factor is associated with the core the holoenzyme is formed, which can initiate transcription.

It catalyses the reaction RNA(n) + a ribonucleoside 5'-triphosphate = RNA(n+1) + diphosphate. DNA-dependent RNA polymerase catalyzes the transcription of DNA into RNA using the four ribonucleoside triphosphates as substrates. The chain is DNA-directed RNA polymerase subunit beta from Staphylococcus aureus (strain Mu50 / ATCC 700699).